The primary structure comprises 1066 residues: Ubiquitin conjugation factor E4 A (1066 aa).

The interval 33–57 (KEQLKQQSDELPASPDDSDNSVSES) is disordered. An N6-acetyllysine modification is found at K386. A U-box domain is found at 987-1061 (DACDEFLDPI…QRWLAERKQQ (75 aa)).

The protein belongs to the ubiquitin conjugation factor E4 family.

The protein localises to the cytoplasm. The enzyme catalyses S-ubiquitinyl-[E2 ubiquitin-conjugating enzyme]-L-cysteine + [acceptor protein]-L-lysine = [E2 ubiquitin-conjugating enzyme]-L-cysteine + N(6)-ubiquitinyl-[acceptor protein]-L-lysine.. It participates in protein modification; protein ubiquitination. In terms of biological role, ubiquitin-protein ligase that probably functions as an E3 ligase in conjunction with specific E1 and E2 ligases. May also function as an E4 ligase mediating the assembly of polyubiquitin chains on substrates ubiquitinated by another E3 ubiquitin ligase. Mediates 'Lys-48'-linked polyubiquitination of substrates. In Pongo abelii (Sumatran orangutan), this protein is Ubiquitin conjugation factor E4 A.